The chain runs to 212 residues: ATP-dependent Clp protease proteolytic subunit (212 aa).

The active-site Nucleophile is the serine 114. Histidine 139 is a catalytic residue.

The protein belongs to the peptidase S14 family. Fourteen ClpP subunits assemble into 2 heptameric rings which stack back to back to give a disk-like structure with a central cavity, resembling the structure of eukaryotic proteasomes.

The protein resides in the cytoplasm. The enzyme catalyses Hydrolysis of proteins to small peptides in the presence of ATP and magnesium. alpha-casein is the usual test substrate. In the absence of ATP, only oligopeptides shorter than five residues are hydrolyzed (such as succinyl-Leu-Tyr-|-NHMec, and Leu-Tyr-Leu-|-Tyr-Trp, in which cleavage of the -Tyr-|-Leu- and -Tyr-|-Trp bonds also occurs).. Functionally, cleaves peptides in various proteins in a process that requires ATP hydrolysis. Has a chymotrypsin-like activity. Plays a major role in the degradation of misfolded proteins. This chain is ATP-dependent Clp protease proteolytic subunit, found in Azoarcus sp. (strain BH72).